A 179-amino-acid polypeptide reads, in one-letter code: Acireductone dioxygenase (179 aa).

Residues 1-21 (MVQAWYMDDSTEDQRKPHHLQ) are disordered. Fe(2+)-binding residues include His-88, His-90, Glu-94, and His-133. 4 residues coordinate Ni(2+): His-88, His-90, Glu-94, and His-133.

It belongs to the acireductone dioxygenase (ARD) family. As to quaternary structure, monomer. Interacts with MMP14. It depends on Fe(2+) as a cofactor. Ni(2+) serves as cofactor.

The protein localises to the cytoplasm. It is found in the nucleus. Its subcellular location is the cell membrane. The enzyme catalyses 1,2-dihydroxy-5-(methylsulfanyl)pent-1-en-3-one + O2 = 4-methylsulfanyl-2-oxobutanoate + formate + 2 H(+). It catalyses the reaction 1,2-dihydroxy-5-(methylsulfanyl)pent-1-en-3-one + O2 = 3-(methylsulfanyl)propanoate + CO + formate + 2 H(+). Its pathway is amino-acid biosynthesis; L-methionine biosynthesis via salvage pathway; L-methionine from S-methyl-5-thio-alpha-D-ribose 1-phosphate: step 5/6. Functionally, catalyzes 2 different reactions between oxygen and the acireductone 1,2-dihydroxy-3-keto-5-methylthiopentene (DHK-MTPene) depending upon the metal bound in the active site. Fe-containing acireductone dioxygenase (Fe-ARD) produces formate and 2-keto-4-methylthiobutyrate (KMTB), the alpha-ketoacid precursor of methionine in the methionine recycle pathway. Ni-containing acireductone dioxygenase (Ni-ARD) produces methylthiopropionate, carbon monoxide and formate, and does not lie on the methionine recycle pathway. This Xenopus tropicalis (Western clawed frog) protein is Acireductone dioxygenase (adi1).